The following is a 447-amino-acid chain: Argininosuccinate synthase (447 aa).

ATP-binding positions include alanine 17–serine 25 and alanine 43. Tyrosine 99 serves as a coordination point for L-citrulline. ATP is bound by residues glycine 129 and threonine 131. Positions 131, 135, and 136 each coordinate L-aspartate. Asparagine 135 contributes to the L-citrulline binding site. Aspartate 136 contacts ATP. L-citrulline contacts are provided by arginine 139 and serine 192. Residue aspartate 194 coordinates ATP. Threonine 201, glutamate 203, and glutamate 280 together coordinate L-citrulline.

This sequence belongs to the argininosuccinate synthase family. Type 2 subfamily. As to quaternary structure, homotetramer.

Its subcellular location is the cytoplasm. It carries out the reaction L-citrulline + L-aspartate + ATP = 2-(N(omega)-L-arginino)succinate + AMP + diphosphate + H(+). The protein operates within amino-acid biosynthesis; L-arginine biosynthesis; L-arginine from L-ornithine and carbamoyl phosphate: step 2/3. This chain is Argininosuccinate synthase, found in Janthinobacterium sp. (strain Marseille) (Minibacterium massiliensis).